The chain runs to 70 residues: UPF0337 protein BT9727_3385 (70 aa).

Belongs to the UPF0337 (CsbD) family.

The protein is UPF0337 protein BT9727_3385 of Bacillus thuringiensis subsp. konkukian (strain 97-27).